Reading from the N-terminus, the 205-residue chain is uncharacterized protein (205 aa).

Residues 1 to 25 (MSNNNNEAQQPVESTNVESQQNVVQ) are compositionally biased toward polar residues. Positions 1-205 (MSNNNNEAQQ…TSDPAQQVEA (205 aa)) are disordered. Positions 32–79 (NENNDNNNNNNNNNNNNNNNNNNNNNNNNSNNNNNSSNNENNENNENN) are enriched in low complexity. Basic and acidic residues predominate over residues 80–122 (SCEKSEQEKPKEPEEPVQEEKSKEPCDQQKVKENEPAEEKETE). 2 stretches are compositionally biased toward low complexity: residues 123–132 (PAAPVEPENP) and 146–162 (QHQQQNHEPQQTSNGES). Residues 170–185 (SENKKRSIDEAGDIKD) are compositionally biased toward basic and acidic residues. The span at 194–205 (VETSDPAQQVEA) shows a compositional bias: polar residues.

This is an uncharacterized protein from Dictyostelium discoideum (Social amoeba).